A 360-amino-acid polypeptide reads, in one-letter code: Protein Wnt-2 (360 aa).

The signal sequence occupies residues 1 to 25 (MNAPLAGIWPWLPLLLTWLAPEVSS). 11 cysteine pairs are disulfide-bonded: Cys76/Cys87, Cys127/Cys135, Cys137/Cys157, Cys206/Cys220, Cys208/Cys215, Cys278/Cys309, Cys294/Cys304, Cys308/Cys348, Cys324/Cys339, Cys326/Cys336, and Cys331/Cys332. Residue Ser212 is the site of O-palmitoleoyl serine; by PORCN attachment. The N-linked (GlcNAc...) asparagine glycan is linked to Asn295.

Belongs to the Wnt family. In terms of processing, palmitoleoylation is required for efficient binding to frizzled receptors. Depalmitoleoylation leads to Wnt signaling pathway inhibition.

It is found in the secreted. The protein localises to the extracellular space. It localises to the extracellular matrix. Its function is as follows. Ligand for members of the frizzled family of seven transmembrane receptors. Functions in the canonical Wnt signaling pathway that results in activation of transcription factors of the TCF/LEF family. Functions as a upstream regulator of FGF10 expression. Plays an important role in embryonic lung development. May contribute to embryonic brain development by regulating the proliferation of dopaminergic precursors and neurons. The polypeptide is Protein Wnt-2 (WNT2) (Loxodonta africana (African elephant)).